The sequence spans 512 residues: Plastidal glycolate/glycerate translocator 1, chloroplastic (512 aa).

A chloroplast-targeting transit peptide spans 1–76 (MATLLATPIF…MNFERKLSVQ (76 aa)). Ala77 carries the post-translational modification N-acetylalanine. 12 consecutive transmembrane segments (helical) span residues 93 to 113 (VIAI…DYFL), 127 to 147 (ALFG…VVPA), 160 to 180 (FLFI…VLPL), 195 to 215 (YIVA…AIAV), 238 to 258 (LELW…LFYP), 270 to 290 (PFLL…PSSI), 293 to 313 (VFHP…AFGY), 336 to 356 (AGDI…FSMF), 367 to 387 (AEIF…TALV), 398 to 418 (TVSI…VSLF), 425 to 445 (LTAA…QVVL), and 480 to 500 (LPFC…LCSV).

This sequence belongs to the CidB/LrgB family. Expressed in leaves, stems and flowers, but not in roots.

It is found in the plastid. The protein resides in the chloroplast membrane. Glycolate/glycerate transporter required for photorespiration. This is Plastidal glycolate/glycerate translocator 1, chloroplastic (PLGG1) from Arabidopsis thaliana (Mouse-ear cress).